We begin with the raw amino-acid sequence, 1096 residues long: Lysine-specific demethylase 4B (1096 aa).

The 43-residue stretch at 15–57 (IMTFRPTMEEFKDFNKYVAYIESQGAHRAGLAKIIPPKEWKPR) folds into the JmjN domain. Tyrosine 133 contributes to the 2-oxoglutarate binding site. The JmjC domain maps to 146-309 (VAQWNIGSLR…YGKVATQCTC (164 aa)). Fe cation-binding residues include histidine 189 and glutamate 191. Asparagine 199 and lysine 207 together coordinate 2-oxoglutarate. The Zn(2+) site is built by cysteine 235 and histidine 241. Lysine 242 lines the 2-oxoglutarate pocket. Position 277 (histidine 277) interacts with Fe cation. Residues cysteine 307 and cysteine 309 each coordinate Zn(2+). The span at 369-382 (LLRRSHRKRSQPKK) shows a compositional bias: basic residues. Disordered regions lie at residues 369–478 (LLRR…SEEA) and 557–649 (KGPT…VSDP). A compositionally biased stretch (low complexity) spans 391–406 (PGEGTAGAALLEEAGG). Residues 413 to 425 (GPEVDPEEEEEEP) are compositionally biased toward acidic residues. Residues 430-443 (HGREAEGAEEDGRG) are compositionally biased toward basic and acidic residues. The segment covering 444–458 (KLRPTKAKSERKKKS) has biased composition (basic residues). Serine 566 carries the post-translational modification Phosphoserine. The residue at position 602 (lysine 602) is an N6-acetyllysine. The span at 632–648 (SSDEEASPFSGEEDVSD) shows a compositional bias: acidic residues. The PHD-type 1 zinc finger occupies 731 to 789 (MCFTSGGENTEPLPANSYIGDDGTSPLIACGKCCLQVHASCYGIRPELVNEGWTCSRCA). The C2HC pre-PHD-type zinc finger occupies 794 to 827 (TAECCLCNLRGGALQMTTDRRWIHVICAIAVPEA). Residues 850–907 (LKCVYCRKRMKKVSGACIQCSYEHCSTSFHVTCAHAAGVLMEPDDWPYVVSITCLKHK) form a PHD-type 2 zinc finger. Tudor domains lie at 917–974 (RAVS…CVQL) and 975–1031 (GPPS…EELP). Positions 1037–1073 (RLSLSTGAPQEPAFSGEEAKAAKRPRVGTPLATEDSG) are disordered. Threonine 1065 bears the Phosphothreonine mark.

The protein belongs to the JHDM3 histone demethylase family. The cofactor is Fe(2+).

It is found in the nucleus. It catalyses the reaction N(6),N(6),N(6)-trimethyl-L-lysyl(9)-[histone H3] + 2 2-oxoglutarate + 2 O2 = N(6)-methyl-L-lysyl(9)-[histone H3] + 2 formaldehyde + 2 succinate + 2 CO2. Functionally, histone demethylase that specifically demethylates 'Lys-9' of histone H3, thereby playing a role in histone code. Does not demethylate histone H3 'Lys-4', H3 'Lys-27', H3 'Lys-36' nor H4 'Lys-20'. Only able to demethylate trimethylated H3 'Lys-9', with a weaker activity than KDM4A, KDM4C and KDM4D. Demethylation of Lys residue generates formaldehyde and succinate. Plays a critical role in the development of the central nervous system (CNS). This is Lysine-specific demethylase 4B (KDM4B) from Homo sapiens (Human).